We begin with the raw amino-acid sequence, 158 residues long: Transcription factor HY5 (158 aa).

Positions 1-25 (MQEQATSSIAASSLPSSSERSSSSA) are enriched in low complexity. Residues 1 to 105 (MQEQATSSIA…NRVSAQQARE (105 aa)) are disordered. The span at 26-44 (LHHELKEGMESDDEIRRVP) shows a compositional bias: basic and acidic residues. The interval 35 to 46 (ESDDEIRRVPEM) is interaction with COP1. Over residues 47 to 58 (GGEATGTTSASG) the composition is skewed to low complexity. Residues 86 to 149 (ENKRLKRLLR…QMLRHILKNT (64 aa)) enclose the bZIP domain. Positions 88 to 108 (KRLKRLLRNRVSAQQARERKK) are basic motif. The segment at 114–142 (LEARVKELETKNAELEERLSTLQNENQML) is leucine-zipper.

The protein belongs to the bZIP family. In terms of assembly, interacts with COP1. In terms of processing, ubiquitinated by COP1. Ubiquitination takes place in darkness and leads to its subsequent degradation, thereby preventing to activate photomorphogenesis signals.

It is found in the nucleus. Functionally, transcription factor that promotes photomorphogenesis in the light and positively regulates fruit pigmentation and fruit nutritional quality. Probably acts downstream of the light receptor network and directly affects transcription of light-induced genes. This is Transcription factor HY5 (HY5) from Solanum lycopersicum (Tomato).